A 235-amino-acid chain; its full sequence is Ribose-5-phosphate isomerase A (235 aa).

Residues 32-35, 89-92, and 102-105 each bind substrate; these read TGST, DGAD, and KGGG. Glu-111 (proton acceptor) is an active-site residue. Residue Lys-129 coordinates substrate.

This sequence belongs to the ribose 5-phosphate isomerase family. In terms of assembly, homodimer.

The enzyme catalyses aldehydo-D-ribose 5-phosphate = D-ribulose 5-phosphate. Its pathway is carbohydrate degradation; pentose phosphate pathway; D-ribose 5-phosphate from D-ribulose 5-phosphate (non-oxidative stage): step 1/1. Its function is as follows. Catalyzes the reversible conversion of ribose-5-phosphate to ribulose 5-phosphate. This chain is Ribose-5-phosphate isomerase A, found in Synechocystis sp. (strain ATCC 27184 / PCC 6803 / Kazusa).